Here is a 473-residue protein sequence, read N- to C-terminus: Arginine biosynthesis bifunctional protein ArgJ, mitochondrial (473 aa).

Residues Thr201, Lys230, Thr241, Glu328, Asn468, and Thr473 each coordinate substrate. Catalysis depends on Thr241, which acts as the Nucleophile.

This sequence belongs to the ArgJ family. As to quaternary structure, heterodimer of an alpha and a beta chain. Post-translationally, the alpha and beta chains are autoproteolytically processed from a single precursor protein within the mitochondrion.

It is found in the mitochondrion matrix. The enzyme catalyses N(2)-acetyl-L-ornithine + L-glutamate = N-acetyl-L-glutamate + L-ornithine. It carries out the reaction L-glutamate + acetyl-CoA = N-acetyl-L-glutamate + CoA + H(+). It functions in the pathway amino-acid biosynthesis; L-arginine biosynthesis; L-ornithine and N-acetyl-L-glutamate from L-glutamate and N(2)-acetyl-L-ornithine (cyclic): step 1/1. It participates in amino-acid biosynthesis; L-arginine biosynthesis; N(2)-acetyl-L-ornithine from L-glutamate: step 1/4. Its function is as follows. Catalyzes two activities which are involved in the cyclic version of arginine biosynthesis: the synthesis of acetylglutamate from glutamate and acetyl-CoA, and of ornithine by transacetylation between acetylornithine and glutamate. This chain is Arginine biosynthesis bifunctional protein ArgJ, mitochondrial, found in Ajellomyces capsulatus (strain H143) (Darling's disease fungus).